A 155-amino-acid chain; its full sequence is RNA pyrophosphohydrolase (155 aa).

The region spanning 6-148 (GYRANVAIVL…KQEVYRKALT (143 aa)) is the Nudix hydrolase domain. The Nudix box motif lies at 38 to 59 (GGVDTGETPLQAMYRELHEEIG).

It belongs to the Nudix hydrolase family. RppH subfamily. It depends on a divalent metal cation as a cofactor.

Functionally, accelerates the degradation of transcripts by removing pyrophosphate from the 5'-end of triphosphorylated RNA, leading to a more labile monophosphorylated state that can stimulate subsequent ribonuclease cleavage. This Francisella tularensis subsp. mediasiatica (strain FSC147) protein is RNA pyrophosphohydrolase.